The following is a 285-amino-acid chain: Probable endonuclease 4 (285 aa).

9 residues coordinate Zn(2+): His-69, His-109, Glu-145, Asp-179, His-182, His-216, Asp-229, His-231, and Glu-261.

It belongs to the AP endonuclease 2 family. Requires Zn(2+) as cofactor.

It catalyses the reaction Endonucleolytic cleavage to 5'-phosphooligonucleotide end-products.. Its function is as follows. Endonuclease IV plays a role in DNA repair. It cleaves phosphodiester bonds at apurinic or apyrimidinic (AP) sites, generating a 3'-hydroxyl group and a 5'-terminal sugar phosphate. The chain is Probable endonuclease 4 from Escherichia coli O1:K1 / APEC.